A 126-amino-acid chain; its full sequence is Non-specific lipid-transfer protein 15 (126 aa).

Positions 1 to 22 (MSKSIFVVCITLLVVLSPTLNA) are cleaved as a signal peptide. 4 disulfide bridges follow: Cys-34-Cys-80, Cys-45-Cys-57, Cys-58-Cys-100, and Cys-78-Cys-114.

Belongs to the plant LTP family.

Its function is as follows. Plant non-specific lipid-transfer proteins transfer phospholipids as well as galactolipids across membranes. May play a role in wax or cutin deposition in the cell walls of expanding epidermal cells and certain secretory tissues. This Arabidopsis thaliana (Mouse-ear cress) protein is Non-specific lipid-transfer protein 15 (LTP15).